We begin with the raw amino-acid sequence, 252 residues long: Large ribosomal subunit protein uL29m (252 aa).

An N6-acetyllysine modification is found at Lys-146. Over residues 230-240 (KKKEKILHAKF) the composition is skewed to basic residues. Residues 230-252 (KKKEKILHAKFPHLSQERKSSSV) are disordered.

It belongs to the universal ribosomal protein uL29 family. Component of the mitochondrial ribosome large subunit (39S) which comprises a 16S rRNA and about 50 distinct proteins.

The protein resides in the mitochondrion. The polypeptide is Large ribosomal subunit protein uL29m (Mrpl47) (Mus musculus (Mouse)).